A 298-amino-acid chain; its full sequence is Nucleotide-binding protein GTNG_3015 (298 aa).

17–24 (GMSGAGKT) is a binding site for ATP. 68-71 (DLRS) contacts GTP.

The protein belongs to the RapZ-like family.

Its function is as follows. Displays ATPase and GTPase activities. The sequence is that of Nucleotide-binding protein GTNG_3015 from Geobacillus thermodenitrificans (strain NG80-2).